Consider the following 122-residue polypeptide: S-adenosylmethionine decarboxylase proenzyme (122 aa).

S63 functions as the Schiff-base intermediate with substrate; via pyruvic acid in the catalytic mechanism. Residue S63 is modified to Pyruvic acid (Ser); by autocatalysis. H68 serves as the catalytic Proton acceptor; for processing activity. C83 functions as the Proton donor; for catalytic activity in the catalytic mechanism.

Belongs to the prokaryotic AdoMetDC family. Type 1 subfamily. Heterotetramer of two alpha and two beta chains arranged as a dimer of alpha/beta heterodimers. Pyruvate serves as cofactor. Post-translationally, is synthesized initially as an inactive proenzyme. Formation of the active enzyme involves a self-maturation process in which the active site pyruvoyl group is generated from an internal serine residue via an autocatalytic post-translational modification. Two non-identical subunits are generated from the proenzyme in this reaction, and the pyruvate is formed at the N-terminus of the alpha chain, which is derived from the carboxyl end of the proenzyme. The post-translation cleavage follows an unusual pathway, termed non-hydrolytic serinolysis, in which the side chain hydroxyl group of the serine supplies its oxygen atom to form the C-terminus of the beta chain, while the remainder of the serine residue undergoes an oxidative deamination to produce ammonia and the pyruvoyl group blocking the N-terminus of the alpha chain.

It carries out the reaction S-adenosyl-L-methionine + H(+) = S-adenosyl 3-(methylsulfanyl)propylamine + CO2. Its pathway is amine and polyamine biosynthesis; S-adenosylmethioninamine biosynthesis; S-adenosylmethioninamine from S-adenosyl-L-methionine: step 1/1. Functionally, catalyzes the decarboxylation of S-adenosylmethionine to S-adenosylmethioninamine (dcAdoMet), the propylamine donor required for the synthesis of the polyamines spermine and spermidine from the diamine putrescine. The chain is S-adenosylmethionine decarboxylase proenzyme from Methanococcus vannielii (strain ATCC 35089 / DSM 1224 / JCM 13029 / OCM 148 / SB).